Here is a 107-residue protein sequence, read N- to C-terminus: Thioredoxin 1 (107 aa).

The 106-residue stretch at Ser-2–Leu-107 folds into the Thioredoxin domain. Cys-32 and Cys-35 are joined by a disulfide.

Belongs to the thioredoxin family.

In terms of biological role, participates in various redox reactions through the reversible oxidation of its active center dithiol to a disulfide and catalyzes dithiol-disulfide exchange reactions. This Nostoc sp. (strain PCC 7120 / SAG 25.82 / UTEX 2576) protein is Thioredoxin 1 (trxA).